A 515-amino-acid chain; its full sequence is Maturase K (515 aa).

Belongs to the intron maturase 2 family. MatK subfamily.

It is found in the plastid. It localises to the chloroplast. In terms of biological role, usually encoded in the trnK tRNA gene intron. Probably assists in splicing its own and other chloroplast group II introns. This chain is Maturase K, found in Helonias bullata (Swamp pink).